Consider the following 85-residue polypeptide: Large ribosomal subunit protein bL27 (85 aa).

Residues 1–21 (MAHKKAGGSTRNGRDSESKRL) form a disordered region.

It belongs to the bacterial ribosomal protein bL27 family.

In Pseudomonas putida (strain W619), this protein is Large ribosomal subunit protein bL27.